The chain runs to 401 residues: Phosphonopyruvate decarboxylase (401 aa).

Residues 382–401 (WPASAVGSGTRAAAGSAGDR) are disordered. The span at 384–401 (ASAVGSGTRAAAGSAGDR) shows a compositional bias: low complexity.

It belongs to the TPP enzyme family. It depends on thiamine diphosphate as a cofactor. Mg(2+) is required as a cofactor.

The catalysed reaction is 3-phosphonopyruvate + H(+) = phosphonoacetaldehyde + CO2. The protein operates within secondary metabolite biosynthesis; bialaphos biosynthesis. Functionally, involved in the biosynthesis of phosphinothricin tripeptide (PTT), also known as bialaphos (BA), a natural-product antibiotic and potent herbicide. Catalyzes the decarboxylation of phosphonopyruvate (PnPy) to generate phosphonoacetaldehyde (PnAA). The chain is Phosphonopyruvate decarboxylase from Streptomyces hygroscopicus.